The chain runs to 198 residues: Dephospho-CoA kinase (198 aa).

The DPCK domain maps to 4–198; the sequence is IIGITGGIAS…DSQLRRLQNE (195 aa). 12 to 17 provides a ligand contact to ATP; sequence ASGKST.

The protein belongs to the CoaE family.

It is found in the cytoplasm. It carries out the reaction 3'-dephospho-CoA + ATP = ADP + CoA + H(+). It participates in cofactor biosynthesis; coenzyme A biosynthesis; CoA from (R)-pantothenate: step 5/5. Its function is as follows. Catalyzes the phosphorylation of the 3'-hydroxyl group of dephosphocoenzyme A to form coenzyme A. The sequence is that of Dephospho-CoA kinase from Streptococcus mutans serotype c (strain ATCC 700610 / UA159).